Reading from the N-terminus, the 153-residue chain is Ribosome-binding factor A (153 aa).

Positions 116 to 153 are disordered; that stretch reads DAQVAEQAQGAQYAAGEDAYRTPSDEDDAEGPESAPRV. Positions 119-132 are enriched in low complexity; the sequence is VAEQAQGAQYAAGE.

Belongs to the RbfA family. Monomer. Binds 30S ribosomal subunits, but not 50S ribosomal subunits or 70S ribosomes.

The protein resides in the cytoplasm. In terms of biological role, one of several proteins that assist in the late maturation steps of the functional core of the 30S ribosomal subunit. Associates with free 30S ribosomal subunits (but not with 30S subunits that are part of 70S ribosomes or polysomes). Required for efficient processing of 16S rRNA. May interact with the 5'-terminal helix region of 16S rRNA. The chain is Ribosome-binding factor A from Kocuria rhizophila (strain ATCC 9341 / DSM 348 / NBRC 103217 / DC2201).